Reading from the N-terminus, the 634-residue chain is Probable potassium transport system protein Kup (634 aa).

The next 12 membrane-spanning stretches (helical) occupy residues 21 to 41 (IILS…LYTL), 58 to 78 (VLGI…IKYV), 110 to 130 (IYIV…DGII), 148 to 168 (PHMK…LFLC), 180 to 200 (FGPI…YNII), 217 to 237 (FFLE…LAVT), 258 to 278 (WMYV…ALVL), 296 to 316 (GLYP…QALI), 348 to 368 (IYVP…VIGF), 377 to 397 (AYGV…IIYA), 408 to 428 (LLMI…ANII), and 432 to 452 (DGAW…RTWL).

It belongs to the HAK/KUP transporter (TC 2.A.72) family.

Its subcellular location is the cell inner membrane. It catalyses the reaction K(+)(in) + H(+)(in) = K(+)(out) + H(+)(out). In terms of biological role, transport of potassium into the cell. Likely operates as a K(+):H(+) symporter. This is Probable potassium transport system protein Kup from Xylella fastidiosa (strain Temecula1 / ATCC 700964).